The chain runs to 124 residues: Small ribosomal subunit protein uS12 (124 aa).

Residues 1 to 32 (MPTIQQLVRKGRQAKTTKTKTPALKGSPQRRG) are disordered. The segment covering 9 to 18 (RKGRQAKTTK) has biased composition (basic residues). A 3-methylthioaspartic acid modification is found at Asp89. The segment at 105–124 (QGVRNRKQARSRYGAKKEKS) is disordered. The span at 108-118 (RNRKQARSRYG) shows a compositional bias: basic residues.

This sequence belongs to the universal ribosomal protein uS12 family. In terms of assembly, part of the 30S ribosomal subunit. Contacts proteins S8 and S17. May interact with IF1 in the 30S initiation complex.

Functionally, with S4 and S5 plays an important role in translational accuracy. Interacts with and stabilizes bases of the 16S rRNA that are involved in tRNA selection in the A site and with the mRNA backbone. Located at the interface of the 30S and 50S subunits, it traverses the body of the 30S subunit contacting proteins on the other side and probably holding the rRNA structure together. The combined cluster of proteins S8, S12 and S17 appears to hold together the shoulder and platform of the 30S subunit. The polypeptide is Small ribosomal subunit protein uS12 (Salinispora arenicola (strain CNS-205)).